Consider the following 778-residue polypeptide: DEK domain-containing chromatin-associated protein 4 (778 aa).

Disordered stretches follow at residues 1 to 334 (MGEE…RPVR) and 475 to 689 (LVNE…PSDE). Residues 14-26 (ANGTSSLQKTSDA) are compositionally biased toward polar residues. Composition is skewed to basic and acidic residues over residues 40 to 95 (EVQE…PEAD), 121 to 153 (AVMKESVESADNKDAENPEGEQEKESKEEKLEG), 165 to 185 (EEKLVGGDKGDDVDEAEKVEN), and 209 to 243 (TNKGEEVKEANKEDDVEADTKVAEPEVEDKKTESK). A coiled-coil region spans residues 191–300 (KEEALKEKNE…KEDIKKSNKR (110 aa)). A compositionally biased stretch (acidic residues) spans 244–286 (DENEDKEEEKEDEKEESMDDKEDEKEESNDDDKEDEKEESNDD). Composition is skewed to basic and acidic residues over residues 287–296 (KEDKKEDIKK) and 303–323 (GKTEKTRGKTKSDEEKKDIEP). Residues 289–296 (DKKEDIKK) carry the Nuclear localization signal 1 motif. Positions 489–496 (PKKSSPAA) match the Nuclear localization signal 2 motif. Low complexity predominate over residues 491–502 (KSSPAAGSSSSK). Positions 526 to 587 (DDESEEEKED…EESEEETKKK (62 aa)) form a coiled coil. 2 stretches are compositionally biased toward acidic residues: residues 527 to 553 (DESEEEKEDDEEEEKEQEVEEEEEENE) and 560 to 582 (SEDEAPQLSESEENVESEEESEE). A Nuclear localization signal 3 motif is present at residues 618-625 (PKKATQKR). Basic residues predominate over residues 621–631 (ATQKRSAGKRK). Over residues 678–689 (KGKDKNKEPSDE) the composition is skewed to basic and acidic residues. Residues 685 to 740 (EPSDEELKTAIIDILKGVDFNTATFTDILKRLDAKFNISLASKKSSIKRMIQDELT) enclose the DEK-C domain. 2 consecutive DNA-binding regions follow at residues 703–717 (DFNTATFTDILKRLD) and 732–736 (KRMIQ). The stretch at 732-766 (KRMIQDELTKLADEAEDEEGEEEDAEHEEEEEKEK) forms a coiled coil. A disordered region spans residues 741–778 (KLADEAEDEEGEEEDAEHEEEEEKEKAKGSGGGEEVKA). Over residues 745-763 (EAEDEEGEEEDAEHEEEEE) the composition is skewed to acidic residues. A compositionally biased stretch (basic and acidic residues) spans 764 to 778 (KEKAKGSGGGEEVKA).

In terms of assembly, interacts with DEK3.

The protein localises to the nucleus. It localises to the nucleolus. Chromatin-associated protein which contributes to the modulation of chromatin structure (such as super-helical structure of DNA) and function. Binds to chromatin of protein-coding genes throughout the genome to regulate nucleosome occupancy and chromatin accessibility, and to modulate the expression of target genes. This is DEK domain-containing chromatin-associated protein 4 from Arabidopsis thaliana (Mouse-ear cress).